Here is a 603-residue protein sequence, read N- to C-terminus: Myotubularin (603 aa).

The span at 1-13 (MASASTSKYNSHS) shows a compositional bias: polar residues. The disordered stretch occupies residues 1–25 (MASASTSKYNSHSLENESIKRTSRD). Phosphoserine is present on residues Ser-13 and Ser-18. Positions 14-25 (LENESIKRTSRD) are enriched in basic and acidic residues. Residues 29 to 97 (RDLTEAVPRL…GVISRIEKMG (69 aa)) form the GRAM domain. In terms of domain architecture, Myotubularin phosphatase spans 163–538 (GWTVYNPVEE…RHLELWVNYY (376 aa)). A 1,2-diacyl-sn-glycero-3-phospho-(1D-myo-inositol-3,5-bisphosphate)-binding residues include Asn-288, Asn-313, and Ile-314. Asn-288, Asn-313, and Ile-314 together coordinate a 1,2-diacyl-sn-glycero-3-phospho-(1D-myo-inositol-3-phosphate). Cys-375 serves as the catalytic Phosphocysteine intermediate. A 1,2-diacyl-sn-glycero-3-phospho-(1D-myo-inositol-3,5-bisphosphate) is bound by residues Ser-376, Asp-377, Gly-378, Trp-379, Asp-380, Arg-381, Lys-417, and Arg-421. A 1,2-diacyl-sn-glycero-3-phospho-(1D-myo-inositol-3-phosphate)-binding residues include Ser-376, Asp-377, Gly-378, Trp-379, Asp-380, and Arg-381. A 1,2-diacyl-sn-glycero-3-phospho-(1D-myo-inositol-3-phosphate) is bound at residue Arg-421. Thr-495 is modified (phosphothreonine). Positions 579 to 603 (SAKLSDPPTSPSSPSQMMPHVQTHF) are disordered. Ser-588 bears the Phosphoserine mark.

This sequence belongs to the protein-tyrosine phosphatase family. Non-receptor class myotubularin subfamily. In terms of assembly, heterodimer with MTMR12. Interacts with KMT2A/MLL1 (via SET domain). Interacts with DES in skeletal muscle but not in cardiac muscle. Interacts with SPEG.

The protein resides in the cytoplasm. It is found in the cell membrane. The protein localises to the cell projection. It localises to the filopodium. Its subcellular location is the ruffle. The protein resides in the late endosome. It is found in the myofibril. The protein localises to the sarcomere. It catalyses the reaction a 1,2-diacyl-sn-glycero-3-phospho-(1D-myo-inositol-3-phosphate) + H2O = a 1,2-diacyl-sn-glycero-3-phospho-(1D-myo-inositol) + phosphate. The enzyme catalyses a 1,2-diacyl-sn-glycero-3-phospho-(1D-myo-inositol-3,5-bisphosphate) + H2O = a 1,2-diacyl-sn-glycero-3-phospho-(1D-myo-inositol-5-phosphate) + phosphate. It carries out the reaction 1,2-dioctanoyl-sn-glycero-3-phospho-(1-D-myo-inositol-3-phosphate) + H2O = 1,2-dioctanoyl-sn-glycero-3-phospho-(1D-myo-inositol) + phosphate. The catalysed reaction is 1,2-dioctanoyl-sn-glycero-3-phospho-(1D-myo-inositol-3,5-bisphosphate) + H2O = 1,2-dioctanoyl-sn-glycero-3-phospho-(1D-myo-inositol-5-phosphate) + phosphate. It catalyses the reaction 1,2-dihexadecanoyl-sn-glycero-3-phospho-(1D-myo-inositol-3,5-phosphate) + H2O = 1,2-dihexadecanoyl-sn-glycero-3-phospho-(1D-myo-inositol-5-phosphate) + phosphate. With respect to regulation, allosterically activated by phosphatidylinositol 5-phosphate (PI5P). Functionally, lipid phosphatase which dephosphorylates phosphatidylinositol 3-monophosphate (PI3P) and phosphatidylinositol 3,5-bisphosphate (PI(3,5)P2). Has also been shown to dephosphorylate phosphotyrosine- and phosphoserine-containing peptides. Negatively regulates EGFR degradation through regulation of EGFR trafficking from the late endosome to the lysosome. Plays a role in vacuolar formation and morphology. Regulates desmin intermediate filament assembly and architecture. Plays a role in mitochondrial morphology and positioning. Required for skeletal muscle maintenance but not for myogenesis. In skeletal muscles, stabilizes MTMR12 protein levels. The sequence is that of Myotubularin from Pongo abelii (Sumatran orangutan).